A 1789-amino-acid chain; its full sequence is MTSRPPLGVQQRQPQQRKLSGPVLSQQRSLSQSQAQAQAQAQQQQQQQQQQQQQQQQQQQQQQQQQYDASSYLPPPPPVPTRNNNHNNFSNPNNTLNNAFPPELAQQDPTSIVSPADPSGSSPALSVGVGRYGTQRRGGSRLRLELSHNDPFDAFSSPTVIESPGLVEPHTQNGSLTHPMMPLADGPDLGDMSPHHRVSIPPQHLDADVPIPFPQRRPKAVPDHSRREQPPPPPNPARKDTRPKPYTIELPAAAPRYRIRGRSDGQGGQGRSSALATASSSSTTGSSATANYGCADFFPWSGTAGNHPEDQFNDTAIRVGYSEKQFVTPETQSAKTVLFHGLKQRSGLNALSIFFAGVLWHRRNAGQVTAPSTFKPPPRVTLTDTKKEVWLKDLANSAIPLRKLSRSIPHGVRNKVLLDQCLNKNVPIDRAVWLAKCVGTNELRTFRRLGKGNNASVLEGERKWLKDWTLVIENFIERVFFSFGEQNWKAKVNYAIQLAAHLYAEGLMDREHYLDWTVSSLESSHHSQLPMWIIIAQIYWKDLLRLRKYGRRLATALISHYHVIHAHEDRDIYVPLLSKLSHLLGTLMVATPENFVSPSVWVKYRDALKTCLPQGDEARHRSFAGINYRNEQLVASANRSQPAARIILVRNLDQVILEKPMPDEFPAQCWTVSKDKAALVRALLEWCTTPYRPGLAKVYVAHRILMHWSTLRLDVTSAVLGFMEGEALEEMECKDALYHLVSELVRSGIFLVSQYIQWLITRGGLTDPQLVMPDGPPFSRLLAELPSHILGSSQKRSRDALLRRAGFRIADDAQDADMAIRHLRHALGLPAGVTDAVSMGRPFPIKKIARRIEDASRARKAEIASWLRNTVFGGELEHSSLNAFGQHDLSTRLFNSIRTVFEAAQEFSVFADVLRMLTKCSNPEVLASIADTITRYTFVFAALSCLKNLFSILHSRLREVQEQGIGARPLLASLAYLASRVPGMDEVAMQLKSDLAVSDRHNPVDACSPVSDNMVSRLSDHDGDLHEEVEKLLANGTSLDRNTMDRLFSAVIQRLQAYWSKGDEQQRVYGILLKRLRMFNPQHFDELMTRWLLYVRGLDTRATILHLYPLLVSIGCLEMPAILATASESPNALGAGNSRHPQSAVATSQIVQTTFRTRYMQEVLQLFMAPVSSESLLTPEERYRFGILQEQAKKESPRELLCLIQLALAEYTCARAQNDLEELPLDKEANQDRLLRLLKLLVLKDPVGVAKALQIRGPDAQIDGWIDRMTTKLLVTAAGEGTRVTFEQVLNLTNEFTLPFCHVKLLLSLSSNDQQQNAADSGERVPSNVELFMNAMEKSMDAQRVSWIGMLPSLSPDLTHHLKNQAQARFLNLLPSARNPPSMTLDRSMLQMRLQKAENFLAIMDTIIRGSGPMGFRQHQLVPVMVERFTDILELLQTLTPFPSQAGGLGGWGGQGASAAAAGGDSHIDLKSDILNHWLPLFLNFLTLHAQTFDTSKPGNEVRGRALMVCAGLIRELDLIHGPDFDTRQLGGRIFDLACVLVDNLAEDARLQCIQALKSPSDVKLRYIFSYQDNPHANLMLCHKERPTAMAIGTATGTGSPAPGTTPTHTPGVTPGPQNAVGAGSAVSGAGGSGNGGSYFSLPGHTQQAQAQGWHAAQQQQQQQQQQQSQQQQQQQQQQQYQLQQQQQQGGTGPIPSPAISINTNLTHLNLGNNSNPPTPSPMNPTRPAMMMVANPWGGYSWVPTMGGPQERLTPFNFRQWEMLSEPTSQVGENDTAVNLMLFESRKVQ.

Disordered regions lie at residues 1 to 138 (MTSR…QRRG), 156 to 288 (SSPT…GSSA), 1592 to 1656 (IGTA…GWHA), and 1707 to 1727 (THLNLGNNSNPPTPSPMNPTR). 2 stretches are compositionally biased toward low complexity: residues 25–66 (SQQR…QQQQ) and 81–98 (TRNNNHNNFSNPNNTLNN). Over residues 107 to 124 (QDPTSIVSPADPSGSSPA) the composition is skewed to polar residues. The span at 220–229 (AVPDHSRREQ) shows a compositional bias: basic and acidic residues. 4 stretches are compositionally biased toward low complexity: residues 271–288 (RSSALATASSSSTTGSSA), 1592–1628 (IGTATGTGSPAPGTTPTHTPGVTPGPQNAVGAGSAVS), 1647–1656 (QQAQAQGWHA), and 1707–1716 (THLNLGNNSN).

It belongs to the Mediator complex subunit 12 family. As to quaternary structure, component of the srb8-11 complex, which itself associates with the Mediator complex.

It localises to the nucleus. In terms of biological role, component of the srb8-11 complex. The srb8-11 complex is a regulatory module of the Mediator complex which is itself involved in regulation of basal and activated RNA polymerase II-dependent transcription. The srb8-11 complex may be involved in the transcriptional repression of a subset of genes regulated by Mediator. It may inhibit the association of the Mediator complex with RNA polymerase II to form the holoenzyme complex. The protein is Mediator of RNA polymerase II transcription subunit 12 (srb8) of Neurospora crassa (strain ATCC 24698 / 74-OR23-1A / CBS 708.71 / DSM 1257 / FGSC 987).